The chain runs to 175 residues: Crossover junction endodeoxyribonuclease RuvC (175 aa).

Catalysis depends on residues Asp16, Glu76, and Asp148. Positions 16, 76, and 148 each coordinate Mg(2+).

The protein belongs to the RuvC family. As to quaternary structure, homodimer which binds Holliday junction (HJ) DNA. The HJ becomes 2-fold symmetrical on binding to RuvC with unstacked arms; it has a different conformation from HJ DNA in complex with RuvA. In the full resolvosome a probable DNA-RuvA(4)-RuvB(12)-RuvC(2) complex forms which resolves the HJ. Mg(2+) serves as cofactor.

The protein localises to the cytoplasm. The catalysed reaction is Endonucleolytic cleavage at a junction such as a reciprocal single-stranded crossover between two homologous DNA duplexes (Holliday junction).. The RuvA-RuvB-RuvC complex processes Holliday junction (HJ) DNA during genetic recombination and DNA repair. Endonuclease that resolves HJ intermediates. Cleaves cruciform DNA by making single-stranded nicks across the HJ at symmetrical positions within the homologous arms, yielding a 5'-phosphate and a 3'-hydroxyl group; requires a central core of homology in the junction. The consensus cleavage sequence is 5'-(A/T)TT(C/G)-3'. Cleavage occurs on the 3'-side of the TT dinucleotide at the point of strand exchange. HJ branch migration catalyzed by RuvA-RuvB allows RuvC to scan DNA until it finds its consensus sequence, where it cleaves and resolves the cruciform DNA. This Rhodopseudomonas palustris (strain BisB18) protein is Crossover junction endodeoxyribonuclease RuvC.